The following is a 403-amino-acid chain: Acetyl-CoA acetyltransferase IB (403 aa).

Cysteine 91 (acyl-thioester intermediate) is an active-site residue. Active-site proton acceptor residues include histidine 353 and cysteine 383. A Microbody targeting signal motif is present at residues 401 to 403 (AKL).

Belongs to the thiolase-like superfamily. Thiolase family. In terms of assembly, multimeric.

The protein localises to the peroxisome. It catalyses the reaction 2 acetyl-CoA = acetoacetyl-CoA + CoA. It functions in the pathway metabolic intermediate biosynthesis; (R)-mevalonate biosynthesis; (R)-mevalonate from acetyl-CoA: step 1/3. This is Acetyl-CoA acetyltransferase IB (PACTB) from Candida tropicalis (Yeast).